Reading from the N-terminus, the 228-residue chain is Vesicle transport protein SEC20 (228 aa).

Residues 1 to 199 (MAAPQDVHVR…LITKYNRREL (199 aa)) are Cytoplasmic-facing. The stretch at 37 to 90 (LSELTELNTKVKEKFQQLKHRIQELEQSAKEQDKESEKQLLLQEVENHKKQMLS) forms a coiled coil. A helical; Anchor for type IV membrane protein transmembrane segment spans residues 200–220 (TDKLLIFLALALFLATVLYIV). The Lumenal portion of the chain corresponds to 221-228 (KKRLFPFL).

This sequence belongs to the SEC20 family. As to quaternary structure, component of a SNARE complex consisting of STX18, USE1L, BNIP1/SEC20L and SEC22B. Interacts directly with STX18, RINT1/TIP20L and NAPA. Interacts with ZW10 through RINT1. Interacts with BCL2. Interacts with RNF186. Interacts with RNF185. Interacts with SQSTM1; increased by 'Lys-63'-linked polyubiquitination of BNIP1. Polyubiquitinated. 'Lys-63'-linked polyubiquitination by RNF185 increases the interaction with the autophagy receptor SQSTM1. Undergoes 'Lys-29'- and 'Lys-63'-linked polyubiquitination by RNF186 that may regulate BNIP1 localization to the mitochondrion.

The protein resides in the endoplasmic reticulum membrane. It is found in the mitochondrion membrane. As part of a SNARE complex may be involved in endoplasmic reticulum membranes fusion and be required for the maintenance of endoplasmic reticulum organization. Also plays a role in apoptosis. It is for instance required for endoplasmic reticulum stress-induced apoptosis. As a substrate of RNF185 interacting with SQSTM1, might also be involved in mitochondrial autophagy. The chain is Vesicle transport protein SEC20 from Rattus norvegicus (Rat).